The chain runs to 840 residues: Lethal(3)malignant brain tumor-like protein 1 (840 aa).

S117 is subject to Phosphoserine. The interval 127-269 is disordered; the sequence is EYEDGGAPAG…WSSSQPATGE (143 aa). Positions 156 to 165 are enriched in acidic residues; that stretch reads PNQDPPEDDS. A compositionally biased stretch (polar residues) spans 200–210; that stretch reads VENSSGSTSAS. The span at 236-247 shows a compositional bias: basic and acidic residues; sequence AMEKQEEGKDPE. Residues 250 to 266 are compositionally biased toward polar residues; it reads PTASTPESEEWSSSQPA. 3 MBT repeats span residues 274–374, 382–481, and 490–585; these read WSWE…LQPP, FSWS…LTPP, and FCWE…LQPP. The tract at residues 447–454 is interaction with monomethylated and dimethylated peptides; sequence FDNWDDTY. The segment at 580 to 605 is disordered; that stretch reads HPLQPPLGPREPSSASPGGCPPLSYR. Residues 613 to 656 form a CCHHC-type zinc finger; sequence SKYSFHHRKCPTPGCDGSGHVTGKFTAHHCLSGCPLAERNQSRL. Zn(2+)-binding residues include C622, C627, H640, and C646. A disordered region spans residues 657-697; that stretch reads KAELSDSEASARKKNLSGFSPRKKPRHHGRIGRPPKYRKIP. The segment covering 677-695 has biased composition (basic residues); that stretch reads PRKKPRHHGRIGRPPKYRK.

As to quaternary structure, homodimer. Interacts with RB1/RB (when monomethylated at 'Lys-860'). Interacts with p53/TP53 (when monomethylated at 'Lys-382'). Interacts with CBX3, ETV6, KMT5A and VCP/p97. Ubiquitinated in a VCP/p97-dependent way following DNA damage, leading to its removal from DNA damage sites, promoting accessibility of H4K20me2 mark for DNA repair protein TP53BP1, which is then recruited to DNA damage sites. As to expression, widely expressed. Expression is reduced in colorectal cancer cell line SW480 and promyelocytic leukemia cell line HL-60.

The protein resides in the nucleus. Polycomb group (PcG) protein that specifically recognizes and binds mono- and dimethyllysine residues on target proteins, thereby acting as a 'reader' of a network of post-translational modifications. PcG proteins maintain the transcriptionally repressive state of genes: acts as a chromatin compaction factor by recognizing and binding mono- and dimethylated histone H1b/H1-4 at 'Lys-26' (H1bK26me1 and H1bK26me2) and histone H4 at 'Lys-20' (H4K20me1 and H4K20me2), leading to condense chromatin and repress transcription. Recognizes and binds p53/TP53 monomethylated at 'Lys-382', leading to repress p53/TP53-target genes. Also recognizes and binds RB1/RB monomethylated at 'Lys-860'. Participates in the ETV6-mediated repression. Probably plays a role in cell proliferation. Overexpression induces multinucleated cells, suggesting that it is required to accomplish normal mitosis. The protein is Lethal(3)malignant brain tumor-like protein 1 (L3MBTL1) of Homo sapiens (Human).